A 388-amino-acid chain; its full sequence is Quinolone resistance protein NorA (388 aa).

Helical transmembrane passes span isoleucine 5 to valine 25, leucine 42 to alanine 62, leucine 69 to histidine 89, valine 99 to isoleucine 119, phenylalanine 129 to phenylalanine 149, methionine 157 to isoleucine 177, tryptophan 201 to phenylalanine 221, aspartate 239 to phenylalanine 259, leucine 269 to alanine 289, tryptophan 293 to isoleucine 313, leucine 331 to phenylalanine 351, and isoleucine 355 to isoleucine 375.

It belongs to the major facilitator superfamily. TCR/Tet family.

It is found in the cell membrane. In terms of biological role, involved in quinolone resistance. May constitute a membrane-associated active efflux pump of hydrophilic quinolones. The sequence is that of Quinolone resistance protein NorA (norA) from Staphylococcus aureus (strain Mu50 / ATCC 700699).